A 507-amino-acid chain; its full sequence is Maturase K (507 aa).

The protein belongs to the intron maturase 2 family. MatK subfamily.

The protein localises to the plastid. Its subcellular location is the chloroplast. In terms of biological role, usually encoded in the trnK tRNA gene intron. Probably assists in splicing its own and other chloroplast group II introns. The chain is Maturase K from Calocedrus decurrens (California incense-cedar).